We begin with the raw amino-acid sequence, 276 residues long: Type III pantothenate kinase (276 aa).

Position 18–25 (18–25) interacts with ATP; the sequence is EIGNSRLH. Substrate contacts are provided by residues Tyr116 and 120–123; that span reads GIDR. Asp122 (proton acceptor) is an active-site residue. Position 142 (Asp142) interacts with K(+). ATP is bound at residue Thr145. Thr200 lines the substrate pocket.

Belongs to the type III pantothenate kinase family. As to quaternary structure, homodimer. It depends on NH4(+) as a cofactor. The cofactor is K(+).

The protein resides in the cytoplasm. It carries out the reaction (R)-pantothenate + ATP = (R)-4'-phosphopantothenate + ADP + H(+). Its pathway is cofactor biosynthesis; coenzyme A biosynthesis; CoA from (R)-pantothenate: step 1/5. In terms of biological role, catalyzes the phosphorylation of pantothenate (Pan), the first step in CoA biosynthesis. This Nostoc sp. (strain PCC 7120 / SAG 25.82 / UTEX 2576) protein is Type III pantothenate kinase.